The primary structure comprises 238 residues: UDP-2,3-diacylglucosamine hydrolase (238 aa).

Positions 8, 10, 41, 78, and 113 each coordinate Mn(2+). 78–79 (NR) contacts substrate. Substrate-binding residues include aspartate 121, serine 159, asparagine 163, lysine 166, and histidine 194. Histidine 194 and histidine 196 together coordinate Mn(2+).

This sequence belongs to the LpxH family. Mn(2+) serves as cofactor.

The protein resides in the cell inner membrane. The catalysed reaction is UDP-2-N,3-O-bis[(3R)-3-hydroxytetradecanoyl]-alpha-D-glucosamine + H2O = 2-N,3-O-bis[(3R)-3-hydroxytetradecanoyl]-alpha-D-glucosaminyl 1-phosphate + UMP + 2 H(+). It participates in glycolipid biosynthesis; lipid IV(A) biosynthesis; lipid IV(A) from (3R)-3-hydroxytetradecanoyl-[acyl-carrier-protein] and UDP-N-acetyl-alpha-D-glucosamine: step 4/6. In terms of biological role, hydrolyzes the pyrophosphate bond of UDP-2,3-diacylglucosamine to yield 2,3-diacylglucosamine 1-phosphate (lipid X) and UMP by catalyzing the attack of water at the alpha-P atom. Involved in the biosynthesis of lipid A, a phosphorylated glycolipid that anchors the lipopolysaccharide to the outer membrane of the cell. The protein is UDP-2,3-diacylglucosamine hydrolase of Shewanella halifaxensis (strain HAW-EB4).